Consider the following 643-residue polypeptide: MACMHQAQLYNDLEELLTGPSVPIVAGAAGAAALTAYINAKYHIAHDLKTLGGGLTQSSEAIDFINRRVAQKRVLTHHIFQEQVQKQSNHPFLIFEGKTWSYKEFSEAYTRVANWLIDELDVQVGEMVAIDGGNSAEHLMLWLALDAIGAATSFLNWNLTGAGLIHCIKLCECRFVIADIDIKANIEPCRGELEETGINIHYYDPSFISSLPNNTPIPDSRTENIELDSVRGLIYTSGTTGLPKGVFISTGRELRTDWSISKYLNLKPTDRMYTCMPLYHAAAHSLCTASVIHGGGTVVLSRKFSHKKFWPEVVASEANIIQYVGELGRYLLNGPKSPYDRAHKVQMAWGNGMRPDVWEAFRERFNIPIIHELYAATDGLGSMTNRNAGPFTANCIALRGLIWHWKFRNQEVLVKMDLDTDEIMRDRNGFAIRCAVNEPGQMLFRLTPETLAGAPSYYNNETATQSRRITDVFQKGDLWFKSGDMLRQDAEGRVYFVDRLGDTFRWKSENVSTNEVADVMGTFPQIAETNVYGVLVPGNDGRVRSLNCHGRRRDRVDIRFAALAKHARDRLPGYAVPLFLRVTPALEYTGTLKIQKGRLKQEGIDPDKISGEDKLYWLPPGSDIYLPFGKMEWQGIVDKRIRL.

Topologically, residues 1–15 (MACMHQAQLYNDLEE) are cytoplasmic. The helical transmembrane segment at 16 to 36 (LLTGPSVPIVAGAAGAAALTA) threads the bilayer. Residues 37 to 138 (YINAKYHIAH…AIDGGNSAEH (102 aa)) lie on the Extracellular side of the membrane. A helical transmembrane segment spans residues 139–159 (LMLWLALDAIGAATSFLNWNL). Residues 160–249 (TGAGLIHCIK…TGLPKGVFIS (90 aa)) are Cytoplasmic-facing. 235–246 (YTSGTTGLPKGV) is a binding site for ATP. The stretch at 250-318 (TGRELRTDWS…FWPEVVASEA (69 aa)) is an intramembrane region. Over 319–643 (NIIQYVGELG…QGIVDKRIRL (325 aa)) the chain is Cytoplasmic. Residues 477-525 (DLWFKSGDMLRQDAEGRVYFVDRLGDTFRWKSENVSTNEVADVMGTFPQ) carry the FACS motif.

Belongs to the ATP-dependent AMP-binding enzyme family.

It localises to the lipid droplet. The protein resides in the cell membrane. The protein localises to the peroxisome membrane. It is found in the peroxisome. The enzyme catalyses a very long-chain fatty acid + ATP + CoA = a very long-chain fatty acyl-CoA + AMP + diphosphate. Acyl-CoA synthetase required for both the import of long chain fatty acids (LCFAs) (C14-C18) and the activation very long chain fatty acids (VLCFAs) (C20-C26) by esterification of the fatty acids into metabolically active CoA-thioesters for subsequent degradation or incorporation into phospholipids. The transport and fatty acyl-CoA synthetase activities are genetically separable and are thus independent activities. Esterifies VLCFAs in the peroxisome matrix. The VLCFAs are actively transported into peroxisomes by a PXA1-PXA2 heterodimeric transporter in the peroxisomal membrane. The polypeptide is Very long-chain fatty acid transport protein (FAT1) (Cochliobolus heterostrophus (Southern corn leaf blight fungus)).